Consider the following 404-residue polypeptide: Cysteine desulfurase IscS (404 aa).

Residues alanine 75 to threonine 76, asparagine 155, glutamine 183, and serine 203 to histidine 205 each bind pyridoxal 5'-phosphate. N6-(pyridoxal phosphate)lysine is present on lysine 206. Pyridoxal 5'-phosphate is bound at residue threonine 243. Cysteine 328 serves as the catalytic Cysteine persulfide intermediate. Cysteine 328 serves as a coordination point for [2Fe-2S] cluster.

This sequence belongs to the class-V pyridoxal-phosphate-dependent aminotransferase family. NifS/IscS subfamily. Homodimer. Forms a heterotetramer with IscU, interacts with other sulfur acceptors. Requires pyridoxal 5'-phosphate as cofactor.

The protein localises to the cytoplasm. It catalyses the reaction (sulfur carrier)-H + L-cysteine = (sulfur carrier)-SH + L-alanine. It participates in cofactor biosynthesis; iron-sulfur cluster biosynthesis. Its function is as follows. Master enzyme that delivers sulfur to a number of partners involved in Fe-S cluster assembly, tRNA modification or cofactor biosynthesis. Catalyzes the removal of elemental sulfur atoms from cysteine to produce alanine. Functions as a sulfur delivery protein for Fe-S cluster synthesis onto IscU, an Fe-S scaffold assembly protein, as well as other S acceptor proteins. The chain is Cysteine desulfurase IscS from Mannheimia succiniciproducens (strain KCTC 0769BP / MBEL55E).